Here is a 68-residue protein sequence, read N- to C-terminus: Lantibiotic mersacidin (68 aa).

The disordered stretch occupies residues Met1–Phe28. Positions Met1–Ala48 are excised as a propeptide. The beta-methyllanthionine (Cys-Thr) cross-link spans Cys49 to Thr50. 2 consecutive cross-links (beta-methyllanthionine (Thr-Cys)) follow at residues Thr52–Cys60 and Thr61–Cys66. A cross-link (S-(2-aminovinyl)-3-methyl-D-cysteine (Thr-Cys)) is located at residues Thr63–Cys68. Ser64 is subject to 2,3-didehydroalanine (Ser).

Belongs to the type B lantibiotic family. Maturation of lantibiotics involves the enzymatic conversion of Thr, and Ser into dehydrated AA and the formation of thioether bonds with cysteine. The carboxy-terminal beta-methyllanthionine undergoes decarboxylation. This is followed by membrane translocation and cleavage of the modified precursor.

Functionally, kills a number of Gram-positive bacteria. Acts at the level of cell wall biosynthesis by interfering with bacterial peptidoglycan biosynthesis. Specifically inhibits the conversion of the lipid II intermediate into polymeric nascent glycan strands by transglycosylation. May interact with the peptidoglycan precursor rather than with the enzyme. The sequence is that of Lantibiotic mersacidin (mrsA) from Bacillus sp. (strain HIL-Y85/54728).